A 203-amino-acid chain; its full sequence is GTP cyclohydrolase 1 (203 aa).

Zn(2+) contacts are provided by Cys-87, His-90, and Cys-158.

The protein belongs to the GTP cyclohydrolase I family. In terms of assembly, toroid-shaped homodecamer, composed of two pentamers of five dimers.

It carries out the reaction GTP + H2O = 7,8-dihydroneopterin 3'-triphosphate + formate + H(+). The protein operates within cofactor biosynthesis; 7,8-dihydroneopterin triphosphate biosynthesis; 7,8-dihydroneopterin triphosphate from GTP: step 1/1. The protein is GTP cyclohydrolase 1 of Xylella fastidiosa (strain 9a5c).